The primary structure comprises 130 residues: MAMKIRLARGGSKKRPFYRIVAADSRMPRDGRFIEKLGTYNPLLPKDSEDRVKMDLERVQYWLGEGAKPTDRVARMLEAAEVLPKTERNNPKKAVPGKKAQDRAEEKAAKAAEASEAPADEAPAEEAAAE.

The interval 82-130 (VLPKTERNNPKKAVPGKKAQDRAEEKAAKAAEASEAPADEAPAEEAAAE) is disordered. A compositionally biased stretch (basic and acidic residues) spans 99–110 (KAQDRAEEKAAK). Acidic residues predominate over residues 118-130 (PADEAPAEEAAAE).

Belongs to the bacterial ribosomal protein bS16 family.

This Dinoroseobacter shibae (strain DSM 16493 / NCIMB 14021 / DFL 12) protein is Small ribosomal subunit protein bS16.